Reading from the N-terminus, the 475-residue chain is MNTVLAQQIANEGGVEAWMIAQQHKSLLRFLTCGSVDDGKSTLIGRLLHDTRQIYEDQLSSLHNDSKRHGTQGEKLDLALLVDGLQAEREQGITIDVAYRYFSTEKRKFIIADTPGHEQYTRNMATGASTCDLAILLIDARKGVLDQTRRHSFISTLLGIKHLIVAINKMDLVDYSEETFTRIREDYLTFAEQLPGNLDIRFVPLSALEGDNVASQSESMLWYSGPTLLEVLETVEIQRVVDAQPMRFPVQYVNRPNLDFRGYAGTLASGRVQVGQRVKVLPSGVESNVARIVTFDGDREEAFAGEAITLVLTDEIDISRGDLLLAADEVLPAVQSASVAVVWMAEQPLSPGQSYDIKIAGKKTRARVDGIRYQVDINNLTQREVENLSLNGIGLVDLTFDEPLVLDRYQQNPVTGGLIFIDRLSNVTVGAGMVHEPVSQATAAASEFSAFELELNALVRRHFPHWGARDLLGDK.

The region spanning 25 to 239 (KSLLRFLTCG…EVLETVEIQR (215 aa)) is the tr-type G domain. Residues 34–41 (GSVDDGKS) are G1. 34–41 (GSVDDGKS) serves as a coordination point for GTP. Residues 92-96 (GITID) are G2. The interval 113–116 (DTPG) is G3. GTP is bound by residues 113 to 117 (DTPGH) and 168 to 171 (NKMD). The tract at residues 168–171 (NKMD) is G4. Residues 206 to 208 (SAL) form a G5 region.

It belongs to the TRAFAC class translation factor GTPase superfamily. Classic translation factor GTPase family. CysN/NodQ subfamily. As to quaternary structure, heterodimer composed of CysD, the smaller subunit, and CysN.

It catalyses the reaction sulfate + ATP + H(+) = adenosine 5'-phosphosulfate + diphosphate. The protein operates within sulfur metabolism; hydrogen sulfide biosynthesis; sulfite from sulfate: step 1/3. With CysD forms the ATP sulfurylase (ATPS) that catalyzes the adenylation of sulfate producing adenosine 5'-phosphosulfate (APS) and diphosphate, the first enzymatic step in sulfur assimilation pathway. APS synthesis involves the formation of a high-energy phosphoric-sulfuric acid anhydride bond driven by GTP hydrolysis by CysN coupled to ATP hydrolysis by CysD. This is Sulfate adenylyltransferase subunit 1 from Escherichia fergusonii (strain ATCC 35469 / DSM 13698 / CCUG 18766 / IAM 14443 / JCM 21226 / LMG 7866 / NBRC 102419 / NCTC 12128 / CDC 0568-73).